A 282-amino-acid polypeptide reads, in one-letter code: Aquaporin NIP1-1 (282 aa).

2 helical membrane passes run 46–66 (IIAEIFGTYFLMFAGCGAVTI) and 74–94 (ITFPGVAIVWGLAVMVMVYAV). Residues 103–105 (NPA) carry the NPA 1 motif. 3 consecutive transmembrane segments (helical) span residues 125–145 (VLAQMLGATLASGTLRLMFGG), 162–182 (SLVIEIITTFYLMFVISGVAT), and 186–206 (AIGELAGLAVGATILLNVLIA). Residues 215–217 (NPA) carry the NPA 2 motif. A helical transmembrane segment spans residues 232 to 252 (IWVYVVGPVVGAVAGAWAYNL).

Belongs to the MIP/aquaporin (TC 1.A.8) family. NIP (TC 1.A.8.12) subfamily.

It localises to the membrane. Its function is as follows. Aquaporins facilitate the transport of water and small neutral solutes across cell membranes. This is Aquaporin NIP1-1 (NIP1-1) from Zea mays (Maize).